Reading from the N-terminus, the 314-residue chain is Olfactory receptor 10A6 (314 aa).

The Extracellular segment spans residues 1-25 (MERQNQSCVVEFILLGFSNYPELQG). Residue N5 is glycosylated (N-linked (GlcNAc...) asparagine). The helical transmembrane segment at 26 to 46 (QLFVAFLVIYLVTLIGNAIII) threads the bilayer. The Cytoplasmic segment spans residues 47-54 (VIVSLDQS). The helical transmembrane segment at 55-75 (LHVPMYLFLLNLSVVDLSFSA) threads the bilayer. Over 76–99 (VIMPEMLVVLSTEKTTISFGGCFA) the chain is Extracellular. An intrachain disulfide couples C97 to C189. Residues 100–120 (QMYFILLFGGAECFLLGAMAY) traverse the membrane as a helical segment. Over 121 to 139 (DRFAAICHPLNYQMIMNKG) the chain is Cytoplasmic. The chain crosses the membrane as a helical span at residues 140-160 (VFMKLIIFSWALGFMLGTVQT). Residues 161-197 (SWVSSFPFCGLNEINHISCETPAVLELACADTFLFEI) are Extracellular-facing. A helical transmembrane segment spans residues 198–217 (YAFTGTFLIILVPFLLILLS). The Cytoplasmic segment spans residues 218–237 (YIRVLFAILKMPSTTGRQKA). Residues 238 to 258 (FSTCAAHLTSVTLFYGTASMT) traverse the membrane as a helical segment. The Extracellular portion of the chain corresponds to 259 to 271 (YLQPKSGYSPETK). A helical transmembrane segment spans residues 272–292 (KVMSLSYSLLTPLLNLLIYSL). Over 293–314 (RNSEMKRALMKLWRRRVVLHTI) the chain is Cytoplasmic.

This sequence belongs to the G-protein coupled receptor 1 family.

The protein resides in the cell membrane. In terms of biological role, odorant receptor. The protein is Olfactory receptor 10A6 (OR10A6) of Homo sapiens (Human).